The sequence spans 236 residues: GTP cyclohydrolase 1 (236 aa).

A disordered region spans residues M1–L52. Residues C127, H130, and C198 each contribute to the Zn(2+) site.

The protein belongs to the GTP cyclohydrolase I family. Toroid-shaped homodecamer, composed of two pentamers of five dimers.

Its subcellular location is the cytoplasm. It is found in the nucleus. It carries out the reaction GTP + H2O = 7,8-dihydroneopterin 3'-triphosphate + formate + H(+). It functions in the pathway cofactor biosynthesis; 7,8-dihydroneopterin triphosphate biosynthesis; 7,8-dihydroneopterin triphosphate from GTP: step 1/1. Its activity is regulated as follows. GTP shows a positive allosteric effect, and tetrahydrobiopterin inhibits the enzyme activity. Zinc is required for catalytic activity. Inhibited by Mg(2+). May positively regulate nitric oxide synthesis in endothelial cells. May be involved in dopamine synthesis. May modify pain sensitivity and persistence. The protein is GTP cyclohydrolase 1 (GCH1) of Gallus gallus (Chicken).